The sequence spans 274 residues: Thiazole synthase (274 aa).

The active-site Schiff-base intermediate with DXP is lysine 111. 1-deoxy-D-xylulose 5-phosphate contacts are provided by residues glycine 172, 198–199 (AG), and 220–221 (NS). The interval 251–274 (RLPERAAASPSSPTTGIIAEAKTK) is disordered.

This sequence belongs to the ThiG family. In terms of assembly, homotetramer. Forms heterodimers with either ThiH or ThiS.

Its subcellular location is the cytoplasm. The catalysed reaction is [ThiS sulfur-carrier protein]-C-terminal-Gly-aminoethanethioate + 2-iminoacetate + 1-deoxy-D-xylulose 5-phosphate = [ThiS sulfur-carrier protein]-C-terminal Gly-Gly + 2-[(2R,5Z)-2-carboxy-4-methylthiazol-5(2H)-ylidene]ethyl phosphate + 2 H2O + H(+). It participates in cofactor biosynthesis; thiamine diphosphate biosynthesis. Functionally, catalyzes the rearrangement of 1-deoxy-D-xylulose 5-phosphate (DXP) to produce the thiazole phosphate moiety of thiamine. Sulfur is provided by the thiocarboxylate moiety of the carrier protein ThiS. In vitro, sulfur can be provided by H(2)S. This chain is Thiazole synthase, found in Prochlorococcus marinus (strain MIT 9313).